Here is a 145-residue protein sequence, read N- to C-terminus: D-aminoacyl-tRNA deacylase (145 aa).

The Gly-cisPro motif, important for rejection of L-amino acids motif lies at 137–138 (GP).

Belongs to the DTD family. As to quaternary structure, homodimer.

The protein localises to the cytoplasm. It carries out the reaction glycyl-tRNA(Ala) + H2O = tRNA(Ala) + glycine + H(+). It catalyses the reaction a D-aminoacyl-tRNA + H2O = a tRNA + a D-alpha-amino acid + H(+). Its function is as follows. An aminoacyl-tRNA editing enzyme that deacylates mischarged D-aminoacyl-tRNAs. Also deacylates mischarged glycyl-tRNA(Ala), protecting cells against glycine mischarging by AlaRS. Acts via tRNA-based rather than protein-based catalysis; rejects L-amino acids rather than detecting D-amino acids in the active site. By recycling D-aminoacyl-tRNA to D-amino acids and free tRNA molecules, this enzyme counteracts the toxicity associated with the formation of D-aminoacyl-tRNA entities in vivo and helps enforce protein L-homochirality. This chain is D-aminoacyl-tRNA deacylase, found in Pseudomonas putida (strain ATCC 700007 / DSM 6899 / JCM 31910 / BCRC 17059 / LMG 24140 / F1).